Reading from the N-terminus, the 290-residue chain is Ribosomal RNA small subunit methyltransferase A (290 aa).

S-adenosyl-L-methionine is bound by residues Asn27, Leu29, Gly54, Glu75, Asp100, and Asn125.

It belongs to the class I-like SAM-binding methyltransferase superfamily. rRNA adenine N(6)-methyltransferase family. RsmA subfamily.

The protein resides in the cytoplasm. It carries out the reaction adenosine(1518)/adenosine(1519) in 16S rRNA + 4 S-adenosyl-L-methionine = N(6)-dimethyladenosine(1518)/N(6)-dimethyladenosine(1519) in 16S rRNA + 4 S-adenosyl-L-homocysteine + 4 H(+). Specifically dimethylates two adjacent adenosines (A1518 and A1519) in the loop of a conserved hairpin near the 3'-end of 16S rRNA in the 30S particle. May play a critical role in biogenesis of 30S subunits. This chain is Ribosomal RNA small subunit methyltransferase A, found in Streptococcus thermophilus (strain ATCC BAA-491 / LMD-9).